The primary structure comprises 59 residues: Potassium channel toxin alpha-KTx 4.1 (59 aa).

The signal sequence occupies residues methionine 1–glutamine 22. Intrachain disulfides connect cysteine 29–cysteine 50, cysteine 35–cysteine 55, and cysteine 39–cysteine 57. Residues glycine 48–cysteine 55 form an interaction with Ca(2+)-activated K(+) channels region.

The protein belongs to the short scorpion toxin superfamily. Potassium channel inhibitor family. Alpha-KTx 04 subfamily. Expressed by the venom gland.

Its subcellular location is the secreted. Its function is as follows. Potently blocks Kv1.1/KCNA1 (85%), Kv1.2/KCNA2 (91%), Kv1.3/KCNA3 (89%), Kv1.6/KCNA6 (94%), and Shaker (97%). The protein is Potassium channel toxin alpha-KTx 4.1 of Tityus serrulatus (Brazilian scorpion).